The chain runs to 131 residues: MSWQTYVDEHLMCEIEGHHLSSAAIVGHDGAVWAQSTAFPQFKPEEMTNIIKDFDEPGFLAPIGLFLGPTKYMVIQGEPGAVIRGKKGSGGITVKKTGQALVIGIYDEPMTPGQCNMVVERLGDYLVKQGL.

Residues Cys13 and Cys115 are joined by a disulfide bond. The short motif at 81 to 97 (AVIRGKKGSGGITVKKT) is the Involved in PIP2 interaction element. Thr111 is subject to Phosphothreonine.

It belongs to the profilin family. In terms of assembly, occurs in many kinds of cells as a complex with monomeric actin in a 1:1 ratio. Post-translationally, phosphorylated by MAP kinases.

It localises to the cytoplasm. Its subcellular location is the cytoskeleton. In terms of biological role, binds to actin and affects the structure of the cytoskeleton. At high concentrations, profilin prevents the polymerization of actin, whereas it enhances it at low concentrations. This is Profilin-6 from Zea mays (Maize).